The sequence spans 337 residues: GTP 3',8-cyclase (337 aa).

A Radical SAM core domain is found at 17–243 (PFQRQYYYLR…HKSHTDGPAK (227 aa)). GTP is bound at residue Arg-26. 2 residues coordinate [4Fe-4S] cluster: Cys-33 and Cys-37. Tyr-39 is a binding site for S-adenosyl-L-methionine. Cys-40 provides a ligand contact to [4Fe-4S] cluster. A GTP-binding site is contributed by Arg-76. S-adenosyl-L-methionine is bound at residue Gly-80. Residue Thr-107 coordinates GTP. S-adenosyl-L-methionine is bound at residue Ser-131. GTP is bound at residue Lys-168. Residue Met-202 coordinates S-adenosyl-L-methionine. Positions 265 and 268 each coordinate [4Fe-4S] cluster. 270 to 272 (RLR) contacts GTP. [4Fe-4S] cluster is bound at residue Cys-282.

The protein belongs to the radical SAM superfamily. MoaA family. Monomer and homodimer. It depends on [4Fe-4S] cluster as a cofactor.

The catalysed reaction is GTP + AH2 + S-adenosyl-L-methionine = (8S)-3',8-cyclo-7,8-dihydroguanosine 5'-triphosphate + 5'-deoxyadenosine + L-methionine + A + H(+). It functions in the pathway cofactor biosynthesis; molybdopterin biosynthesis. Catalyzes the cyclization of GTP to (8S)-3',8-cyclo-7,8-dihydroguanosine 5'-triphosphate. This Haemophilus influenzae (strain 86-028NP) protein is GTP 3',8-cyclase.